The primary structure comprises 247 residues: MADS-box protein defh21 (247 aa).

Residues 1–61 form the MADS-box domain; the sequence is MGRGKIEVKR…GKLTEYCTPP (61 aa). Residues 91-183 form the K-box domain; that stretch reads NDQVIKELTR…WLMSNQIQRQ (93 aa).

In terms of tissue distribution, expressed exclusively in a few inner cell layers of the inner integuments of the ovules.

It is found in the nucleus. Its function is as follows. Probable transcription factor. In Antirrhinum majus (Garden snapdragon), this protein is MADS-box protein defh21 (DEFH21).